Reading from the N-terminus, the 240-residue chain is UDP-2,3-diacylglucosamine hydrolase (240 aa).

Positions 8, 10, 41, 79, and 114 each coordinate Mn(2+). Residue 79–80 (NR) coordinates substrate. Substrate-binding residues include Asp122, Ser160, Asn164, Lys167, and His195. Mn(2+) contacts are provided by His195 and His197.

The protein belongs to the LpxH family. Mn(2+) is required as a cofactor.

The protein resides in the cell inner membrane. It catalyses the reaction UDP-2-N,3-O-bis[(3R)-3-hydroxytetradecanoyl]-alpha-D-glucosamine + H2O = 2-N,3-O-bis[(3R)-3-hydroxytetradecanoyl]-alpha-D-glucosaminyl 1-phosphate + UMP + 2 H(+). The protein operates within glycolipid biosynthesis; lipid IV(A) biosynthesis; lipid IV(A) from (3R)-3-hydroxytetradecanoyl-[acyl-carrier-protein] and UDP-N-acetyl-alpha-D-glucosamine: step 4/6. Hydrolyzes the pyrophosphate bond of UDP-2,3-diacylglucosamine to yield 2,3-diacylglucosamine 1-phosphate (lipid X) and UMP by catalyzing the attack of water at the alpha-P atom. Involved in the biosynthesis of lipid A, a phosphorylated glycolipid that anchors the lipopolysaccharide to the outer membrane of the cell. This Cellvibrio japonicus (strain Ueda107) (Pseudomonas fluorescens subsp. cellulosa) protein is UDP-2,3-diacylglucosamine hydrolase.